The primary structure comprises 373 residues: Leucine aminopeptidase 1 (373 aa).

Positions 1–18 are cleaved as a signal peptide; that stretch reads MKFISVLALGATATSVLG. 2 residues coordinate Zn(2+): His-176 and Asp-195. An N-linked (GlcNAc...) asparagine glycan is attached at Asn-196. Positions 234 and 261 each coordinate Zn(2+). A glycan (N-linked (GlcNAc...) asparagine) is linked at Asn-286. Cys-310 and Cys-314 are disulfide-bonded. His-343 lines the Zn(2+) pocket.

It belongs to the peptidase M28 family. M28E subfamily. Monomer. Requires Zn(2+) as cofactor.

The protein localises to the secreted. Extracellular aminopeptidase which contributes to pathogenicity. This Arthroderma otae (strain ATCC MYA-4605 / CBS 113480) (Microsporum canis) protein is Leucine aminopeptidase 1 (LAP1).